The sequence spans 320 residues: Protease HtpX homolog (320 aa).

2 consecutive transmembrane segments (helical) span residues 6 to 26 (TAMLLAFMTALFMFVGFLIGG) and 28 to 48 (AGMMIAFVIAAGMNFFSYWNS). His-130 contacts Zn(2+). Glu-131 is a catalytic residue. His-134 lines the Zn(2+) pocket. A run of 2 helical transmembrane segments spans residues 145–165 (ITATLAGAISMLGNFAFFFGG) and 173–193 (PLGFVGVLVAMIVAPLAAMLV). Glu-202 provides a ligand contact to Zn(2+). The disordered stretch occupies residues 281–320 (GGMNVSTPPVRAANPSRKSRSVPDTGLGRGGSQPPKGPWS).

The protein belongs to the peptidase M48B family. Zn(2+) is required as a cofactor.

The protein localises to the cell inner membrane. The polypeptide is Protease HtpX homolog (Rhizobium leguminosarum bv. trifolii (strain WSM2304)).